A 466-amino-acid polypeptide reads, in one-letter code: MAKTLYEKVWDSHVVVANEGEAPLIYVDRHLVHEVTSPQAFSGLKVAGRRLRAPEKTFATMDHNTSTKSASLDALSPMARIQVETLQDNCKEFGIKLYDIHHKNQGIVHVMGPELGITLPGTVIVCGDSHTATHGAFGALAFGIGTSEVEHVMATQTLRQNKAKTMKIEVKGHVTPGITAKDIVLAIIGKIGMDGGTGYVVEFCGEAIEALSMEGRMTVCNMAIEMGAKAGMIAPDATTAEYLKGREFAPKAESWEQAIEAWSELKTDADAVFDSTVILEAADIAPQLTWGTNPGQVVAIDGVVPNPQDEPNATVKASIEKALEYVALSAGTSMKDVSINKVFIGSCTNSRIEDLRDAALHAKGKHVAEGVTAIVVPGSGLVKEQAEAEGLDKIFIEAGFEWRLPGCSMCLAMNDDRLEAGDRCASTSNRNFEGRQGRGSRTHLVSPAMAAAAAVAGHFVDIRQTL.

[4Fe-4S] cluster-binding residues include C347, C407, and C410.

It belongs to the aconitase/IPM isomerase family. LeuC type 1 subfamily. As to quaternary structure, heterodimer of LeuC and LeuD. The cofactor is [4Fe-4S] cluster.

The catalysed reaction is (2R,3S)-3-isopropylmalate = (2S)-2-isopropylmalate. It participates in amino-acid biosynthesis; L-leucine biosynthesis; L-leucine from 3-methyl-2-oxobutanoate: step 2/4. Functionally, catalyzes the isomerization between 2-isopropylmalate and 3-isopropylmalate, via the formation of 2-isopropylmaleate. This chain is 3-isopropylmalate dehydratase large subunit, found in Shewanella woodyi (strain ATCC 51908 / MS32).